We begin with the raw amino-acid sequence, 265 residues long: Hydroxyethylthiazole kinase (265 aa).

Met-50 contributes to the substrate binding site. Residues Arg-125 and Thr-171 each contribute to the ATP site. Gly-198 contributes to the substrate binding site.

This sequence belongs to the Thz kinase family. Mg(2+) serves as cofactor.

It carries out the reaction 5-(2-hydroxyethyl)-4-methylthiazole + ATP = 4-methyl-5-(2-phosphooxyethyl)-thiazole + ADP + H(+). The protein operates within cofactor biosynthesis; thiamine diphosphate biosynthesis; 4-methyl-5-(2-phosphoethyl)-thiazole from 5-(2-hydroxyethyl)-4-methylthiazole: step 1/1. Functionally, catalyzes the phosphorylation of the hydroxyl group of 4-methyl-5-beta-hydroxyethylthiazole (THZ). In Cronobacter sakazakii (strain ATCC BAA-894) (Enterobacter sakazakii), this protein is Hydroxyethylthiazole kinase.